Consider the following 130-residue polypeptide: MGIVGVGIDLVSIPDFAEQVDQPGTVFAETFTPGERRDASDKSSSAARLPLARWAAKEAVIKAWSGSRFAQRPVLPEDIHRDIEVVTDMWGRPRVRLTGAIAEYLADVTIHVSLTHEGDTAAAVAILEAP.

The Mg(2+) site is built by D9 and E58.

It belongs to the P-Pant transferase superfamily. AcpS family. Requires Mg(2+) as cofactor.

The protein localises to the cytoplasm. It carries out the reaction apo-[ACP] + CoA = holo-[ACP] + adenosine 3',5'-bisphosphate + H(+). Functionally, transfers the 4'-phosphopantetheine moiety from coenzyme A to a Ser of acyl-carrier-protein. This Mycobacterium tuberculosis (strain CDC 1551 / Oshkosh) protein is Holo-[acyl-carrier-protein] synthase.